The sequence spans 498 residues: Glycerol kinase (498 aa).

T12 lines the ADP pocket. T12, T13, and S14 together coordinate ATP. T12 is a sn-glycerol 3-phosphate binding site. Position 16 (R16) interacts with ADP. Positions 82, 83, 134, and 244 each coordinate sn-glycerol 3-phosphate. R82, E83, Y134, D244, and Q245 together coordinate glycerol. ADP-binding residues include T266 and G309. ATP is bound by residues T266, G309, Q313, and G410. 2 residues coordinate ADP: G410 and N414.

This sequence belongs to the FGGY kinase family. In terms of assembly, homotetramer and homodimer (in equilibrium).

It carries out the reaction glycerol + ATP = sn-glycerol 3-phosphate + ADP + H(+). It participates in polyol metabolism; glycerol degradation via glycerol kinase pathway; sn-glycerol 3-phosphate from glycerol: step 1/1. Activated by phosphorylation and inhibited by fructose 1,6-bisphosphate (FBP). Its function is as follows. Key enzyme in the regulation of glycerol uptake and metabolism. Catalyzes the phosphorylation of glycerol to yield sn-glycerol 3-phosphate. This is Glycerol kinase from Natranaerobius thermophilus (strain ATCC BAA-1301 / DSM 18059 / JW/NM-WN-LF).